Reading from the N-terminus, the 147-residue chain is Hemoglobin subunit beta (147 aa).

Val2 is subject to N-acetylvaline. The Globin domain occupies His3–His147. Thr13 carries the phosphothreonine modification. The residue at position 45 (Ser45) is a Phosphoserine. Lys60 carries the post-translational modification N6-acetyllysine. Residue His64 coordinates heme b. The residue at position 83 (Lys83) is an N6-acetyllysine. His93 contributes to the heme b binding site. Cys94 is modified (S-nitrosocysteine). Lys145 carries the N6-acetyllysine modification.

It belongs to the globin family. In terms of assembly, heterotetramer of two alpha chains and two beta chains. In terms of tissue distribution, red blood cells.

In terms of biological role, involved in oxygen transport from the lung to the various peripheral tissues. The polypeptide is Hemoglobin subunit beta (HBB) (Macaca fascicularis (Crab-eating macaque)).